The sequence spans 306 residues: Putative lipid kinase Sca_1050 (306 aa).

In terms of domain architecture, DAGKc spans Gln-3 to Tyr-139. Residues Ser-44, Gly-74–Glu-80, and Thr-101 each bind ATP. Residues Ser-220, Asp-223, and Glu-225 each contribute to the Mg(2+) site. Glu-281 serves as the catalytic Proton acceptor.

Belongs to the diacylglycerol/lipid kinase family. Mg(2+) is required as a cofactor.

In terms of biological role, may catalyze the ATP-dependent phosphorylation of lipids other than diacylglycerol (DAG). The chain is Putative lipid kinase Sca_1050 from Staphylococcus carnosus (strain TM300).